Reading from the N-terminus, the 459-residue chain is Alpha,alpha-trehalose-phosphate synthase [UDP-forming] (459 aa).

The D-glucose 6-phosphate site is built by Tyr-86 and Asp-140. UDP contacts are provided by Arg-262 and Lys-267. Residues Arg-262 and Lys-267 each contribute to the UDP-alpha-D-glucose site. Residue Arg-300 participates in D-glucose 6-phosphate binding. 361–369 is a UDP-alpha-D-glucose binding site; the sequence is DGMNLVALE. A UDP-binding site is contributed by 365 to 369; that stretch reads LVALE.

Belongs to the glycosyltransferase 20 family. As to quaternary structure, component of the trehalose synthase complex.

It localises to the cytoplasm. It catalyses the reaction D-glucose 6-phosphate + UDP-alpha-D-glucose = alpha,alpha-trehalose 6-phosphate + UDP + H(+). Functionally, synthase catalytic subunit of the trehalose synthase complex that catalyzes the production of trehalose from glucose-6-phosphate and UDP-alpha-D-glucose in a two step process. Can function independently of the complex. This chain is Alpha,alpha-trehalose-phosphate synthase [UDP-forming] (TPS1), found in Encephalitozoon cuniculi (strain GB-M1) (Microsporidian parasite).